Reading from the N-terminus, the 206-residue chain is Small ribosomal subunit protein uS4 (206 aa).

The 63-residue stretch at 96–158 (GRLDNVVYRM…AKQQSRIKAA (63 aa)) folds into the S4 RNA-binding domain.

This sequence belongs to the universal ribosomal protein uS4 family. As to quaternary structure, part of the 30S ribosomal subunit. Contacts protein S5. The interaction surface between S4 and S5 is involved in control of translational fidelity.

One of the primary rRNA binding proteins, it binds directly to 16S rRNA where it nucleates assembly of the body of the 30S subunit. Its function is as follows. With S5 and S12 plays an important role in translational accuracy. This is Small ribosomal subunit protein uS4 from Aliivibrio fischeri (strain ATCC 700601 / ES114) (Vibrio fischeri).